A 423-amino-acid chain; its full sequence is ATP-citrate synthase alpha chain protein 2 (423 aa).

Citrate-binding residues include N343, T345, and R376.

This sequence belongs to the succinate/malate CoA ligase beta subunit family. As to quaternary structure, heterooctamer of 4 alpha and 4 beta chains.

Its subcellular location is the cytoplasm. The protein localises to the cytosol. The catalysed reaction is oxaloacetate + acetyl-CoA + ADP + phosphate = citrate + ATP + CoA. Functionally, ATP citrate-lyase is the primary enzyme responsible for the synthesis of cytosolic acetyl-CoA, used for the elongation of fatty acids and biosynthesis of isoprenoids, flavonoids and malonated derivatives. May supply substrate to the cytosolic acetyl-CoA carboxylase, which generates the malonyl-CoA used for the synthesis of a multitude of compounds, including very long chain fatty acids and flavonoids. In contrast to all known animal ACL enzymes having a homomeric structure, plant ACLs are composed of alpha and beta chains. In Oryza sativa subsp. japonica (Rice), this protein is ATP-citrate synthase alpha chain protein 2 (ACLA-2).